Reading from the N-terminus, the 258-residue chain is Ribosomal protein L11 methyltransferase (258 aa).

Positions 117, 138, 160, and 201 each coordinate S-adenosyl-L-methionine.

This sequence belongs to the methyltransferase superfamily. PrmA family.

It localises to the cytoplasm. The enzyme catalyses L-lysyl-[protein] + 3 S-adenosyl-L-methionine = N(6),N(6),N(6)-trimethyl-L-lysyl-[protein] + 3 S-adenosyl-L-homocysteine + 3 H(+). Its function is as follows. Methylates ribosomal protein L11. The polypeptide is Ribosomal protein L11 methyltransferase (Thermosipho melanesiensis (strain DSM 12029 / CIP 104789 / BI429)).